Here is a 331-residue protein sequence, read N- to C-terminus: uncharacterized protein (331 aa).

It belongs to the IIV-6 335L family.

This is an uncharacterized protein from Invertebrate iridescent virus 6 (IIV-6).